Consider the following 275-residue polypeptide: Putative hydro-lyase SPO1111 (275 aa).

It belongs to the D-glutamate cyclase family.

The polypeptide is Putative hydro-lyase SPO1111 (Ruegeria pomeroyi (strain ATCC 700808 / DSM 15171 / DSS-3) (Silicibacter pomeroyi)).